We begin with the raw amino-acid sequence, 527 residues long: MPQNTRHTSIVEMLSTPPQLPNSTDLNSLSEQTDKNTEANKSDTESLHKSISKSSSSSSLSTLDNTEYSNNNGNSLSTLNSQNLLSVHRQEWQHTPLSNLVEQNKLIFIRGSISVEEAFNTLVKHQLTSLPVENFPGDMNCLTFDYNDLNAYLLLVLNRIKVSNDKITSDCQNGKSVPVGEIVKLTPKNPFYKLPETENLSTVIGILGSGVHRVAITNVEMTQIKGILSQRRLIKYLWENARSFPNLKPLLDSSLEELNIGVLNAARDKPTFKQSRVISIQGDEHLIMALHKMYVERISSIAVVDPQGNLIGNISVTDVKHVTRTSQYPLLHNTCRHFVSVILNLRGLETGKDSFPIFHVYPTSSLARTFAKLVATKSHRLWIVQPNDNQPTASSEKSSSPSPSTPPVTTLPSLASSYHSNTQSSRMANSPVLKSSDTSNNKINVNINLSGPSPSQPQSPSATMPPPQSPSNCPASPTPAHFEKEYRTGKLIGVVSLTDILSVLARKQTHHKEIDPQMARKQRGHIG.

The interval 1–75 (MPQNTRHTSI…TEYSNNNGNS (75 aa)) is disordered. Position 9 is a phosphoserine (Ser-9). Polar residues predominate over residues 21–31 (PNSTDLNSLSE). Positions 32–48 (QTDKNTEANKSDTESLH) are enriched in basic and acidic residues. Ser-42 and Ser-46 each carry phosphoserine. Residues 52-61 (SKSSSSSSLS) show a composition bias toward low complexity. CBS domains follow at residues 101-162 (VEQN…RIKV), 185-243 (LTPK…NARS), 272-330 (FKQS…QYPL), and 335-391 (CRHF…DNQP). Residues 385 to 481 (QPNDNQPTAS…NCPASPTPAH (97 aa)) form a disordered region. The segment covering 391–417 (PTASSEKSSSPSPSTPPVTTLPSLASS) has biased composition (low complexity). A compositionally biased stretch (polar residues) spans 418–449 (YHSNTQSSRMANSPVLKSSDTSNNKINVNINL). The residue at position 430 (Ser-430) is a Phosphoserine. Over residues 450-462 (SGPSPSQPQSPSA) the composition is skewed to low complexity.

Belongs to the SDS23 family.

It is found in the cytoplasm. Its subcellular location is the nucleus. Involved in DNA replication and cell separation during budding. This chain is Protein SDS23 (SDS23), found in Saccharomyces cerevisiae (strain ATCC 204508 / S288c) (Baker's yeast).